Consider the following 583-residue polypeptide: Aspartate--tRNA(Asp/Asn) ligase (583 aa).

E171 serves as a coordination point for L-aspartate. An aspartate region spans residues 195–198; sequence QLFK. Position 217 (R217) interacts with L-aspartate. ATP contacts are provided by residues 217–219 and Q226; that span reads RDE. H443 serves as a coordination point for L-aspartate. Residue E476 participates in ATP binding. R483 contributes to the L-aspartate binding site. ATP is bound at residue 528-531; sequence GLDR.

This sequence belongs to the class-II aminoacyl-tRNA synthetase family. Type 1 subfamily. As to quaternary structure, homodimer.

It localises to the cytoplasm. The catalysed reaction is tRNA(Asx) + L-aspartate + ATP = L-aspartyl-tRNA(Asx) + AMP + diphosphate. Its function is as follows. Aspartyl-tRNA synthetase with relaxed tRNA specificity since it is able to aspartylate not only its cognate tRNA(Asp) but also tRNA(Asn). Reaction proceeds in two steps: L-aspartate is first activated by ATP to form Asp-AMP and then transferred to the acceptor end of tRNA(Asp/Asn). This is Aspartate--tRNA(Asp/Asn) ligase from Ruthia magnifica subsp. Calyptogena magnifica.